A 212-amino-acid chain; its full sequence is Large ribosomal subunit protein uL3 (212 aa).

Q153 bears the N5-methylglutamine mark.

This sequence belongs to the universal ribosomal protein uL3 family. Part of the 50S ribosomal subunit. Forms a cluster with proteins L14 and L19. In terms of processing, methylated by PrmB.

Its function is as follows. One of the primary rRNA binding proteins, it binds directly near the 3'-end of the 23S rRNA, where it nucleates assembly of the 50S subunit. The polypeptide is Large ribosomal subunit protein uL3 (Shewanella sediminis (strain HAW-EB3)).